Here is a 525-residue protein sequence, read N- to C-terminus: GMP synthase [glutamine-hydrolyzing] (525 aa).

Residues 9–207 (RILILDFGSQ…VRDICQCEAL (199 aa)) enclose the Glutamine amidotransferase type-1 domain. The active-site Nucleophile is the cysteine 86. Catalysis depends on residues histidine 181 and glutamate 183. Residues 208 to 400 (WTPAKIIDDA…LGLPYDMLYR (193 aa)) enclose the GMPS ATP-PPase domain. 235 to 241 (SGGVDSS) contacts ATP.

Homodimer.

The catalysed reaction is XMP + L-glutamine + ATP + H2O = GMP + L-glutamate + AMP + diphosphate + 2 H(+). It participates in purine metabolism; GMP biosynthesis; GMP from XMP (L-Gln route): step 1/1. Catalyzes the synthesis of GMP from XMP. The sequence is that of GMP synthase [glutamine-hydrolyzing] from Enterobacter sp. (strain 638).